Reading from the N-terminus, the 974-residue chain is UvrABC system protein A (974 aa).

ATP is bound at residue 34 to 41 (GLSGSGKS). 2 consecutive ABC transporter domains span residues 331 to 610 (WARS…TNSL) and 630 to 959 (ISKT…QFLK). 663–670 (GVSGGGKS) serves as a coordination point for ATP. A C4-type zinc finger spans residues 762–788 (CEACQGDGVIKIEMHFLPDVYVTCDVC).

This sequence belongs to the ABC transporter superfamily. UvrA family. In terms of assembly, forms a heterotetramer with UvrB during the search for lesions.

The protein resides in the cytoplasm. Its function is as follows. The UvrABC repair system catalyzes the recognition and processing of DNA lesions. UvrA is an ATPase and a DNA-binding protein. A damage recognition complex composed of 2 UvrA and 2 UvrB subunits scans DNA for abnormalities. When the presence of a lesion has been verified by UvrB, the UvrA molecules dissociate. This Brucella suis biovar 1 (strain 1330) protein is UvrABC system protein A.